The following is a 371-amino-acid chain: tRNA-specific 2-thiouridylase MnmA (371 aa).

ATP contacts are provided by residues 9 to 16 (AMSGGVDS) and Met35. Cys109 serves as the catalytic Nucleophile. Cys109 and Cys207 are disulfide-bonded. Gly133 contacts ATP. The tract at residues 157–159 (KDQ) is interaction with tRNA. Cys207 acts as the Cysteine persulfide intermediate in catalysis.

Belongs to the MnmA/TRMU family.

The protein resides in the cytoplasm. The enzyme catalyses S-sulfanyl-L-cysteinyl-[protein] + uridine(34) in tRNA + AH2 + ATP = 2-thiouridine(34) in tRNA + L-cysteinyl-[protein] + A + AMP + diphosphate + H(+). In terms of biological role, catalyzes the 2-thiolation of uridine at the wobble position (U34) of tRNA, leading to the formation of s(2)U34. This chain is tRNA-specific 2-thiouridylase MnmA, found in Solibacter usitatus (strain Ellin6076).